The following is a 424-amino-acid chain: Protein shisa-9 (424 aa).

The N-terminal stretch at 1–23 (MRRVLRLLLGCFLTELCARVCRA) is a signal peptide. The Extracellular segment spans residues 24–149 (QERAGHGQLA…DPLHDPTKDK (126 aa)). N45, N89, and N116 each carry an N-linked (GlcNAc...) asparagine glycan. Residues 150–170 (TNLIVYIICGVVAVMVLVGIF) form a helical membrane-spanning segment. Topologically, residues 171 to 424 (TKLGLEKAHR…ITNSKTEVTV (254 aa)) are cytoplasmic. Residues 333-424 (PRAFSPEHGP…ITNSKTEVTV (92 aa)) are disordered. Over residues 414 to 424 (FITNSKTEVTV) the composition is skewed to polar residues.

Belongs to the shisa family. SHISA9 subfamily. Component of some AMPA receptors (ionotropic glutamate receptors) complex, at least composed of some AMPA receptor (GRIA1, GRIA2 and/or GRIA3), CACNG2 and SHISA9, as well as low level of DLG4.

It localises to the cell projection. It is found in the dendritic spine membrane. Its subcellular location is the synapse. Its function is as follows. Regulator of short-term neuronal synaptic plasticity in the dentate gyrus. Associates with AMPA receptors (ionotropic glutamate receptors) in synaptic spines and promotes AMPA receptor desensitization at excitatory synapses. The sequence is that of Protein shisa-9 (SHISA9) from Homo sapiens (Human).